We begin with the raw amino-acid sequence, 236 residues long: Truncated formate dehydrogenase 2 (236 aa).

Residues 36–37 (RI), D57, 104–108 (PLHKD), T130, D156, and 185–188 (HISG) contribute to the NAD(+) site.

It belongs to the D-isomer specific 2-hydroxyacid dehydrogenase family. FDH subfamily.

The polypeptide is Truncated formate dehydrogenase 2 (Saccharomyces cerevisiae (strain ATCC 204508 / S288c) (Baker's yeast)).